A 238-amino-acid chain; its full sequence is Sugar fermentation stimulation protein homolog (238 aa).

The protein belongs to the SfsA family.

This is Sugar fermentation stimulation protein homolog from Pseudomonas entomophila (strain L48).